Here is a 657-residue protein sequence, read N- to C-terminus: Methyl-accepting chemotaxis protein CtpL (657 aa).

Topologically, residues 1-5 (MRLKQ) are cytoplasmic. Residues 6-26 (LTNLNTLLLLTVCLALGITLW) traverse the membrane as a helical segment. At 27-305 (WSQRAMERPF…ERQRLQGQVR (279 aa)) the chain is on the periplasmic side. A helical transmembrane segment spans residues 306–326 (LIQGGMIALILLIALAIDSLQ). In terms of domain architecture, HAMP spans 327–380 (RRLARVLGQLVPALSAWADGDFSRPISLRTRTEDLRNLEDSLNRLRSFLAELVG). The Cytoplasmic portion of the chain corresponds to 327–657 (RRLARVLGQL…LRTTVQAFRL (331 aa)). The Methyl-accepting transducer domain maps to 385–621 (RAEQVAGSSQ…EIRSHSERIH (237 aa)).

Belongs to the methyl-accepting chemotaxis (MCP) protein family.

Its subcellular location is the cell inner membrane. In terms of biological role, chemotactic-signal transducers respond to changes in the concentration of attractants and repellents in the environment, transduce a signal from the outside to the inside of the cell, and facilitate sensory adaptation through the variation of the level of methylation. Chemoreceptor for inorganic phosphate, which is required for taxis at low concentrations of phosphate. Is also responsible for the positive chemotaxis toward 4-chloroaniline (4CA) and catechol. Does not recognize inorganic phosphate directly, but via a complex between the periplasmic protein PstS and inorganic phosphate. The protein is Methyl-accepting chemotaxis protein CtpL of Pseudomonas aeruginosa (strain ATCC 15692 / DSM 22644 / CIP 104116 / JCM 14847 / LMG 12228 / 1C / PRS 101 / PAO1).